The following is a 397-amino-acid chain: Tryptophan synthase beta chain (397 aa).

The residue at position 91 (K91) is an N6-(pyridoxal phosphate)lysine.

This sequence belongs to the TrpB family. As to quaternary structure, tetramer of two alpha and two beta chains. Requires pyridoxal 5'-phosphate as cofactor.

It catalyses the reaction (1S,2R)-1-C-(indol-3-yl)glycerol 3-phosphate + L-serine = D-glyceraldehyde 3-phosphate + L-tryptophan + H2O. It functions in the pathway amino-acid biosynthesis; L-tryptophan biosynthesis; L-tryptophan from chorismate: step 5/5. Its function is as follows. The beta subunit is responsible for the synthesis of L-tryptophan from indole and L-serine. The sequence is that of Tryptophan synthase beta chain from Bacillus cereus (strain ZK / E33L).